We begin with the raw amino-acid sequence, 129 residues long: Large ribosomal subunit protein uL22 (129 aa).

The protein belongs to the universal ribosomal protein uL22 family. Part of the 50S ribosomal subunit.

This protein binds specifically to 23S rRNA; its binding is stimulated by other ribosomal proteins, e.g. L4, L17, and L20. It is important during the early stages of 50S assembly. It makes multiple contacts with different domains of the 23S rRNA in the assembled 50S subunit and ribosome. Functionally, the globular domain of the protein is located near the polypeptide exit tunnel on the outside of the subunit, while an extended beta-hairpin is found that lines the wall of the exit tunnel in the center of the 70S ribosome. The chain is Large ribosomal subunit protein uL22 from Prochlorococcus marinus (strain MIT 9211).